Here is a 145-residue protein sequence, read N- to C-terminus: Putative pre-16S rRNA nuclease (145 aa).

This sequence belongs to the YqgF nuclease family.

Its subcellular location is the cytoplasm. Could be a nuclease involved in processing of the 5'-end of pre-16S rRNA. This Prochlorococcus marinus (strain MIT 9211) protein is Putative pre-16S rRNA nuclease.